Reading from the N-terminus, the 482-residue chain is Major cardiolipin synthase ClsA (482 aa).

2 helical membrane-spanning segments follow: residues 3-23 (ISSI…IIVI) and 34-54 (WAWL…YLLF). 2 consecutive PLD phosphodiesterase domains span residues 217-244 (LNYR…GDEY) and 395-422 (DNGF…DVRS). Residues histidine 222, lysine 224, aspartate 229, histidine 400, lysine 402, and aspartate 407 contribute to the active site.

The protein belongs to the phospholipase D family. Cardiolipin synthase subfamily.

It localises to the cell membrane. It carries out the reaction 2 a 1,2-diacyl-sn-glycero-3-phospho-(1'-sn-glycerol) = a cardiolipin + glycerol. Its function is as follows. Catalyzes the reversible phosphatidyl group transfer from one phosphatidylglycerol molecule to another to form cardiolipin (CL) (diphosphatidylglycerol) and glycerol. This chain is Major cardiolipin synthase ClsA (clsA), found in Bacillus subtilis (strain 168).